A 616-amino-acid polypeptide reads, in one-letter code: Probable Xaa-Pro aminopeptidase P (616 aa).

The Mn(2+) site is built by aspartate 413, aspartate 424, glutamate 522, and glutamate 536.

It belongs to the peptidase M24B family. It depends on Mn(2+) as a cofactor.

It catalyses the reaction Release of any N-terminal amino acid, including proline, that is linked to proline, even from a dipeptide or tripeptide.. In terms of biological role, catalyzes the removal of a penultimate prolyl residue from the N-termini of peptides. The protein is Probable Xaa-Pro aminopeptidase P (AMPP) of Paracoccidioides lutzii (strain ATCC MYA-826 / Pb01) (Paracoccidioides brasiliensis).